Here is a 287-residue protein sequence, read N- to C-terminus: Seed leukoagglutinin (287 aa).

Positions 1 to 29 (MATSNSKPTQVLLATFLTFFFLLLNNVNS) are cleaved as a signal peptide. Tyr74 is an N-acetyl-alpha-neuraminyl-(2-&gt;3)-beta-D-galactosyl-(1-&gt;4)-beta-D-glucose binding site. Asn90 carries N-linked (GlcNAc...) (paucimannose) asparagine glycosylation. 3 residues coordinate N-acetyl-alpha-neuraminyl-(2-&gt;3)-beta-D-galactosyl-(1-&gt;4)-beta-D-glucose: Asp116, Ser133, and Lys136. Asn142 carries N-linked (GlcNAc...) (paucimannose) asparagine glycosylation. Residues Glu156 and Asp158 each contribute to the Mn(2+) site. Ca(2+) contacts are provided by Asp158, Tyr160, Asp166, and Asp169. N-acetyl-alpha-neuraminyl-(2-&gt;3)-beta-D-galactosyl-(1-&gt;4)-beta-D-glucose contacts are provided by Tyr160 and Asp166. Positions 169 and 174 each coordinate Mn(2+). N-linked (GlcNAc...) (high mannose) asparagine; partial glycosylation is present at Asn208. An N-linked (GlcNAc...) (paucimannose) asparagine; partial glycan is attached at Asn220. Glu253 is an N-acetyl-alpha-neuraminyl-(2-&gt;3)-beta-D-galactosyl-(1-&gt;4)-beta-D-glucose binding site. The propeptide at 279–287 (NVHIARYTA) is removed in mature form.

It belongs to the leguminous lectin family. In terms of assembly, homodimer; disulfide-linked. Dimer of homodimers. In terms of processing, the glycosylation on N-90 is determined to by of the high mannose type in PubMed:26003537, while PubMed:27720757 found a paucimannose at this position. Processed at its C-terminus.

Its function is as follows. Sialic acid-binding lectin recognizing oligosaccharides containing terminal sialic acid linked via alpha-2,3 bond to penultimate galactose residues. Binds the trisaccharide sequence Neu5Ac-alpha-2,3-Gal-beta-1,4-GlcNAc. Binds fetuin when fully glycosylated but not when the high mannose-type glycans are removed, although the secondary structure is virtually unaffected by deglycosylation of the high mannose-type glycans. The lectin activity may depend on the presence of a single GlcNAc attached to N-90. In Maackia amurensis (Amur maackia), this protein is Seed leukoagglutinin.